A 239-amino-acid polypeptide reads, in one-letter code: MSREEEEKLLFPSFAFPAECFPEAATSGGEQKKARQRRRRKVKPEAAAALAGESGGDEQAKKRRLSDEQARFLEMSFKKERKLETPRKVQLAAELGLDAKQVAVWFQNRRARHKSKLMEEEFAKLRSAHDAVVLQNCHLETELLKLKERLADVEEEKAKLAAVAAATTGGGGGGGGGSSSPTSSSFSTVTYHPVLAGQFGVEAAAEEADLTYMSEYAYNSYMLELAAAGYCGGVYDQFS.

A disordered region spans residues 22 to 65 (PEAATSGGEQKKARQRRRRKVKPEAAAALAGESGGDEQAKKRRL). The homeobox DNA-binding region spans 58-117 (EQAKKRRLSDEQARFLEMSFKKERKLETPRKVQLAAELGLDAKQVAVWFQNRRARHKSKL). A coiled-coil region spans residues 107-168 (QNRRARHKSK…KLAAVAAATT (62 aa)).

It belongs to the HD-ZIP homeobox family. Class I subfamily. As to expression, expressed in seedlings, roots, stems, leaf sheaths and panicles.

It is found in the nucleus. Its function is as follows. Probable transcription factor. The sequence is that of Homeobox-leucine zipper protein HOX12 (HOX12) from Oryza sativa subsp. indica (Rice).